The following is a 191-amino-acid chain: ATP-dependent Clp protease proteolytic subunit 1 (191 aa).

Ser-91 acts as the Nucleophile in catalysis. The active site involves His-116.

Belongs to the peptidase S14 family. In terms of assembly, fourteen ClpP subunits assemble into 2 heptameric rings which stack back to back to give a disk-like structure with a central cavity, resembling the structure of eukaryotic proteasomes.

The protein localises to the cytoplasm. It catalyses the reaction Hydrolysis of proteins to small peptides in the presence of ATP and magnesium. alpha-casein is the usual test substrate. In the absence of ATP, only oligopeptides shorter than five residues are hydrolyzed (such as succinyl-Leu-Tyr-|-NHMec, and Leu-Tyr-Leu-|-Tyr-Trp, in which cleavage of the -Tyr-|-Leu- and -Tyr-|-Trp bonds also occurs).. In terms of biological role, cleaves peptides in various proteins in a process that requires ATP hydrolysis. Has a chymotrypsin-like activity. Plays a major role in the degradation of misfolded proteins. The sequence is that of ATP-dependent Clp protease proteolytic subunit 1 from Chlamydia pneumoniae (Chlamydophila pneumoniae).